Consider the following 879-residue polypeptide: Pentatricopeptide repeat-containing protein At1g71210, mitochondrial (879 aa).

Residues 1-44 (MLRCWSVTVERSCEGMLLRRRILSLSASSFRNFTSGNNGDAIPF) constitute a mitochondrion transit peptide. PPR repeat units lie at residues 181–215 (SLRL…GLDL), 216–246 (DSFG…ISVR), 250–280 (CAVT…LLPN), 285–319 (CGSG…GTVN), 320–355 (MDRA…GCEL), 356–390 (EVFR…GVSP), 391–425 (NKKT…GFAP), 426–460 (TAMS…GHFL), 461–495 (GGKT…DLLP), 496–530 (KRIA…GVDT), 531–565 (SFKM…GYTP), 566–597 (TRSL…FQLS), 602–636 (KVQA…GITP), 637–667 (TVAS…LREQ), 671–705 (KKRL…GLQP), and 706–740 (SIEC…GRRI).

This sequence belongs to the PPR family. P subfamily.

It localises to the mitochondrion. This Arabidopsis thaliana (Mouse-ear cress) protein is Pentatricopeptide repeat-containing protein At1g71210, mitochondrial.